Reading from the N-terminus, the 424-residue chain is Histidine--tRNA ligase (424 aa).

Belongs to the class-II aminoacyl-tRNA synthetase family. In terms of assembly, homodimer.

Its subcellular location is the cytoplasm. The catalysed reaction is tRNA(His) + L-histidine + ATP = L-histidyl-tRNA(His) + AMP + diphosphate + H(+). In Escherichia coli (strain 55989 / EAEC), this protein is Histidine--tRNA ligase.